Consider the following 104-residue polypeptide: Large ribosomal subunit protein uL24 (104 aa).

Belongs to the universal ribosomal protein uL24 family. In terms of assembly, part of the 50S ribosomal subunit.

In terms of biological role, one of two assembly initiator proteins, it binds directly to the 5'-end of the 23S rRNA, where it nucleates assembly of the 50S subunit. Its function is as follows. One of the proteins that surrounds the polypeptide exit tunnel on the outside of the subunit. The chain is Large ribosomal subunit protein uL24 from Shewanella denitrificans (strain OS217 / ATCC BAA-1090 / DSM 15013).